The following is a 344-amino-acid chain: Cytochrome c biogenesis protein CcsA (344 aa).

8 helical membrane-spanning segments follow: residues 21-41 (NVAF…AAFP), 45-65 (LLSE…AALL), 80-100 (LYES…LALH), 106-126 (WVGV…ALAL), 151-171 (VMLL…AFLI), 252-272 (LIGL…VWAN), 287-307 (WALI…TKGW), and 313-333 (ALLA…VNFL).

The protein belongs to the CcmF/CycK/Ccl1/NrfE/CcsA family. In terms of assembly, may interact with ccs1.

The protein localises to the cellular thylakoid membrane. Its function is as follows. Required during biogenesis of c-type cytochromes (cytochrome c6 and cytochrome f) at the step of heme attachment. The protein is Cytochrome c biogenesis protein CcsA of Synechococcus sp. (strain JA-3-3Ab) (Cyanobacteria bacterium Yellowstone A-Prime).